The primary structure comprises 39 residues: Cytochrome b559 subunit beta (39 aa).

The chain crosses the membrane as a helical span at residues 14-30; that stretch reads WLAVHGLAVPTVSFLGS. Heme is bound at residue histidine 18.

The protein belongs to the PsbE/PsbF family. As to quaternary structure, heterodimer of an alpha subunit and a beta subunit. PSII is composed of 1 copy each of membrane proteins PsbA, PsbB, PsbC, PsbD, PsbE, PsbF, PsbH, PsbI, PsbJ, PsbK, PsbL, PsbM, PsbT, PsbX, PsbY, PsbZ, Psb30/Ycf12, at least 3 peripheral proteins of the oxygen-evolving complex and a large number of cofactors. It forms dimeric complexes. Heme b is required as a cofactor.

The protein localises to the plastid. The protein resides in the chloroplast thylakoid membrane. Functionally, this b-type cytochrome is tightly associated with the reaction center of photosystem II (PSII). PSII is a light-driven water:plastoquinone oxidoreductase that uses light energy to abstract electrons from H(2)O, generating O(2) and a proton gradient subsequently used for ATP formation. It consists of a core antenna complex that captures photons, and an electron transfer chain that converts photonic excitation into a charge separation. The polypeptide is Cytochrome b559 subunit beta (Muilla maritima (Sea muilla)).